Here is a 379-residue protein sequence, read N- to C-terminus: PqqA peptide cyclase (379 aa).

The 213-residue stretch at leucine 8 to arginine 220 folds into the Radical SAM core domain. Residues cysteine 22, cysteine 26, and cysteine 29 each contribute to the [4Fe-4S] cluster site.

The protein belongs to the radical SAM superfamily. PqqE family. Interacts with PqqD. The interaction is necessary for activity of PqqE. It depends on [4Fe-4S] cluster as a cofactor.

The enzyme catalyses [PQQ precursor protein] + S-adenosyl-L-methionine = E-Y cross-linked-[PQQ precursor protein] + 5'-deoxyadenosine + L-methionine + H(+). Its pathway is cofactor biosynthesis; pyrroloquinoline quinone biosynthesis. Functionally, catalyzes the cross-linking of a glutamate residue and a tyrosine residue in the PqqA protein as part of the biosynthesis of pyrroloquinoline quinone (PQQ). This Methylobacterium nodulans (strain LMG 21967 / CNCM I-2342 / ORS 2060) protein is PqqA peptide cyclase.